A 367-amino-acid polypeptide reads, in one-letter code: 2-aminoethylphosphonate--pyruvate transaminase (367 aa).

N6-(pyridoxal phosphate)lysine is present on Lys194.

This sequence belongs to the class-V pyridoxal-phosphate-dependent aminotransferase family. PhnW subfamily. As to quaternary structure, homodimer. Pyridoxal 5'-phosphate is required as a cofactor.

The enzyme catalyses (2-aminoethyl)phosphonate + pyruvate = phosphonoacetaldehyde + L-alanine. In terms of biological role, involved in phosphonate degradation. This Salmonella heidelberg (strain SL476) protein is 2-aminoethylphosphonate--pyruvate transaminase.